A 594-amino-acid polypeptide reads, in one-letter code: Aspartate--tRNA(Asp/Asn) ligase (594 aa).

Glutamate 173 contributes to the L-aspartate binding site. An aspartate region spans residues 197–200 (QLFK). Residue arginine 219 coordinates L-aspartate. ATP-binding positions include 219-221 (RDE) and glutamine 228. Residue histidine 451 coordinates L-aspartate. Residue glutamate 485 participates in ATP binding. Arginine 492 serves as a coordination point for L-aspartate. Residue 537–540 (GWDR) participates in ATP binding. Residues 566–594 (PLTDAPAPITAQQRKESGIDAQPKRVQQA) are disordered.

Belongs to the class-II aminoacyl-tRNA synthetase family. Type 1 subfamily. As to quaternary structure, homodimer.

It is found in the cytoplasm. It carries out the reaction tRNA(Asx) + L-aspartate + ATP = L-aspartyl-tRNA(Asx) + AMP + diphosphate. Its function is as follows. Aspartyl-tRNA synthetase with relaxed tRNA specificity since it is able to aspartylate not only its cognate tRNA(Asp) but also tRNA(Asn). Reaction proceeds in two steps: L-aspartate is first activated by ATP to form Asp-AMP and then transferred to the acceptor end of tRNA(Asp/Asn). In Mycobacterium tuberculosis (strain CDC 1551 / Oshkosh), this protein is Aspartate--tRNA(Asp/Asn) ligase.